We begin with the raw amino-acid sequence, 539 residues long: Glycerol kinase (539 aa).

T49 contributes to the ADP binding site. 3 residues coordinate ATP: T49, T50, and S51. Sn-glycerol 3-phosphate is bound at residue T49. Residue R53 coordinates ADP. The sn-glycerol 3-phosphate site is built by R119, E120, Y171, and D280. Glycerol contacts are provided by R119, E120, Y171, D280, and Q281. ADP is bound by residues T302 and G345. 4 residues coordinate ATP: T302, G345, Q349, and G446. G446 and N450 together coordinate ADP.

This sequence belongs to the FGGY kinase family.

It carries out the reaction glycerol + ATP = sn-glycerol 3-phosphate + ADP + H(+). It participates in polyol metabolism; glycerol degradation via glycerol kinase pathway; sn-glycerol 3-phosphate from glycerol: step 1/1. Its activity is regulated as follows. Inhibited by fructose 1,6-bisphosphate (FBP). Key enzyme in the regulation of glycerol uptake and metabolism. Catalyzes the phosphorylation of glycerol to yield sn-glycerol 3-phosphate. The sequence is that of Glycerol kinase from Rhodopirellula baltica (strain DSM 10527 / NCIMB 13988 / SH1).